The primary structure comprises 371 residues: Aspartate-semialdehyde dehydrogenase (371 aa).

Residues 10-13 (RGMV), 37-38 (TS), and glutamine 74 each bind NADP(+). Residue arginine 103 participates in phosphate binding. The active-site Acyl-thioester intermediate is the cysteine 136. Glutamine 163 is a substrate binding site. Serine 166 contacts NADP(+). Glutamate 243 is a binding site for substrate. Residue lysine 246 coordinates phosphate. Arginine 270 is a binding site for substrate. Histidine 277 acts as the Proton acceptor in catalysis. NADP(+) is bound at residue glutamine 353.

It belongs to the aspartate-semialdehyde dehydrogenase family. In terms of assembly, homodimer.

The enzyme catalyses L-aspartate 4-semialdehyde + phosphate + NADP(+) = 4-phospho-L-aspartate + NADPH + H(+). It participates in amino-acid biosynthesis; L-lysine biosynthesis via DAP pathway; (S)-tetrahydrodipicolinate from L-aspartate: step 2/4. Its pathway is amino-acid biosynthesis; L-methionine biosynthesis via de novo pathway; L-homoserine from L-aspartate: step 2/3. The protein operates within amino-acid biosynthesis; L-threonine biosynthesis; L-threonine from L-aspartate: step 2/5. Catalyzes the NADPH-dependent formation of L-aspartate-semialdehyde (L-ASA) by the reductive dephosphorylation of L-aspartyl-4-phosphate. This chain is Aspartate-semialdehyde dehydrogenase, found in Haemophilus influenzae (strain ATCC 51907 / DSM 11121 / KW20 / Rd).